Here is a 291-residue protein sequence, read N- to C-terminus: 4-hydroxy-tetrahydrodipicolinate synthase (291 aa).

Pyruvate is bound at residue T42. The active-site Proton donor/acceptor is Y129. The Schiff-base intermediate with substrate role is filled by K157. I198 is a pyruvate binding site.

This sequence belongs to the DapA family. As to quaternary structure, homotetramer; dimer of dimers.

Its subcellular location is the cytoplasm. It catalyses the reaction L-aspartate 4-semialdehyde + pyruvate = (2S,4S)-4-hydroxy-2,3,4,5-tetrahydrodipicolinate + H2O + H(+). Its pathway is amino-acid biosynthesis; L-lysine biosynthesis via DAP pathway; (S)-tetrahydrodipicolinate from L-aspartate: step 3/4. Its function is as follows. Catalyzes the condensation of (S)-aspartate-beta-semialdehyde [(S)-ASA] and pyruvate to 4-hydroxy-tetrahydrodipicolinate (HTPA). In Chlamydia pneumoniae (Chlamydophila pneumoniae), this protein is 4-hydroxy-tetrahydrodipicolinate synthase.